The primary structure comprises 419 residues: L-rhamnose isomerase (419 aa).

His262, Asp294, and Asp296 together coordinate Mn(2+).

Belongs to the rhamnose isomerase family. In terms of assembly, homotetramer. The cofactor is Mn(2+).

It localises to the cytoplasm. The catalysed reaction is L-rhamnopyranose = L-rhamnulose. It participates in carbohydrate degradation; L-rhamnose degradation; glycerone phosphate from L-rhamnose: step 1/3. Catalyzes the interconversion of L-rhamnose and L-rhamnulose. The polypeptide is L-rhamnose isomerase (Salmonella typhimurium (strain LT2 / SGSC1412 / ATCC 700720)).